Here is a 64-residue protein sequence, read N- to C-terminus: H/ACA ribonucleoprotein complex subunit 3-like protein (64 aa).

This sequence belongs to the NOP10 family. As to quaternary structure, component of the small nucleolar ribonucleoprotein particles containing H/ACA-type snoRNAs (H/ACA snoRNPs).

It is found in the nucleus. The protein resides in the nucleolus. Required for ribosome biogenesis. Part of a complex which catalyzes pseudouridylation of rRNA. This involves the isomerization of uridine such that the ribose is subsequently attached to C5, instead of the normal N1. Pseudouridine ('psi') residues may serve to stabilize the conformation of rRNAs. The polypeptide is H/ACA ribonucleoprotein complex subunit 3-like protein (Arabidopsis thaliana (Mouse-ear cress)).